A 514-amino-acid polypeptide reads, in one-letter code: MTFLIDKMYNILPPELWIKIVDYSGEINLLLVDTNFFELFNLVDAKIDVIEYIVRNNLTDILKYIVVLKTLKHPIINKNFVPTKSLNKLLIDNCEKRRLDIIQYLINIGADINSKKNRAVRLASERGYLEIVKYLVSQGADVRANKDYAVVWASRNGHLEVVKYLVSLGANIKVDDNFAVRWASRNGYIDVVKYLTSQDANIRADNNYAVRLASENGHIDVVKYLVSLGADIRADNNYAIRHASRGGHIEVVEYLVSLGANVKSCNDCAVKFASKNGHLGVVKYLASQGADVRSENDYAFRMASENGHLEVVVYLVRQGVNVRADNNYAVRMASENGYLEIVKFLVSQGANIRSKNDYAIQKASKNGHLEVVEHLVNQGANFKSDYDCAIKLASENGHLEVVKYLVSQDADIRVNNDYAIRWASRNGHIEVVKYLVSQGADIRADNDYAVRMASENGHLEVVKYLVNLGANVKAQNNYAVGWASRNGHIGVVKYLVSQGADVRSGNNCAAIMGF.

ANK repeat units lie at residues 45 to 74 (AKID…LKHP), 84 to 114 (KSLN…DINS), 115 to 144 (KKNR…DVRA), 146 to 174 (KDYA…NIKV), 176 to 204 (DNFA…NIRA), 205 to 234 (DNNY…DIRA), 236 to 264 (NNYA…NVKS), 266 to 294 (NDCA…DVRS), 295 to 324 (ENDY…NVRA), 325 to 354 (DNNY…NIRS), 356 to 384 (NDYA…NFKS), 385 to 414 (DYDC…DIRV), 415 to 444 (NNDY…DIRA), 446 to 474 (NDYA…NVKA), and 476 to 504 (NNYA…DVRS).

The protein is Putative ankyrin repeat protein R863 of Acanthamoeba polyphaga mimivirus (APMV).